The sequence spans 278 residues: Large ribosomal subunit protein uL2 (278 aa).

Residues 226-278 are disordered; that stretch reads NPIDHPHGGGEGRTSGGRHPVTPWGKPTKGKKTRSNKSTDKFILISRHKRKKK.

The protein belongs to the universal ribosomal protein uL2 family. As to quaternary structure, part of the 50S ribosomal subunit. Forms a bridge to the 30S subunit in the 70S ribosome.

Its function is as follows. One of the primary rRNA binding proteins. Required for association of the 30S and 50S subunits to form the 70S ribosome, for tRNA binding and peptide bond formation. It has been suggested to have peptidyltransferase activity; this is somewhat controversial. Makes several contacts with the 16S rRNA in the 70S ribosome. The chain is Large ribosomal subunit protein uL2 from Rhodopseudomonas palustris (strain HaA2).